A 112-amino-acid polypeptide reads, in one-letter code: 2Fe-2S ferredoxin (112 aa).

The region spanning Ile-5 to Thr-107 is the 2Fe-2S ferredoxin-type domain. Positions 42, 48, 51, and 88 each coordinate [2Fe-2S] cluster.

The protein belongs to the adrenodoxin/putidaredoxin family. Requires [2Fe-2S] cluster as cofactor.

In terms of biological role, ferredoxin are iron-sulfur proteins that transfer electrons in a wide variety of metabolic reactions. The sequence is that of 2Fe-2S ferredoxin (fdxB) from Rickettsia felis (strain ATCC VR-1525 / URRWXCal2) (Rickettsia azadi).